A 93-amino-acid polypeptide reads, in one-letter code: Microcin N immunity protein (93 aa).

3 helical membrane passes run 3–23, 36–56, and 68–88; these read FLNF…FIVW, LSII…NYKI, and LFCF…YFIL.

The protein belongs to the MceB microcin immunity protein family.

It is found in the cell inner membrane. Its function is as follows. Probably able to protect the producing cell against microcin N (microcin 24). This chain is Microcin N immunity protein, found in Escherichia coli.